Consider the following 273-residue polypeptide: Putative pyruvate, phosphate dikinase regulatory protein 2 (273 aa).

151 to 158 (GISRTSKT) is a binding site for ADP.

This sequence belongs to the pyruvate, phosphate/water dikinase regulatory protein family. PDRP subfamily.

The catalysed reaction is N(tele)-phospho-L-histidyl/L-threonyl-[pyruvate, phosphate dikinase] + ADP = N(tele)-phospho-L-histidyl/O-phospho-L-threonyl-[pyruvate, phosphate dikinase] + AMP + H(+). The enzyme catalyses N(tele)-phospho-L-histidyl/O-phospho-L-threonyl-[pyruvate, phosphate dikinase] + phosphate + H(+) = N(tele)-phospho-L-histidyl/L-threonyl-[pyruvate, phosphate dikinase] + diphosphate. In terms of biological role, bifunctional serine/threonine kinase and phosphorylase involved in the regulation of the pyruvate, phosphate dikinase (PPDK) by catalyzing its phosphorylation/dephosphorylation. This is Putative pyruvate, phosphate dikinase regulatory protein 2 from Staphylococcus saprophyticus subsp. saprophyticus (strain ATCC 15305 / DSM 20229 / NCIMB 8711 / NCTC 7292 / S-41).